Reading from the N-terminus, the 505-residue chain is Protein dml1 (505 aa).

Residues 330 to 358 (LPEDMSNHTQPVQNPEDRRTQASKGGSSK) form a disordered region.

The protein belongs to the misato family.

It is found in the mitochondrion. Involved in the partitioning of the mitochondrial organelle and mitochondrial DNA (mtDNA) inheritance. The polypeptide is Protein dml1 (dml1) (Aspergillus fumigatus (strain ATCC MYA-4609 / CBS 101355 / FGSC A1100 / Af293) (Neosartorya fumigata)).